The primary structure comprises 427 residues: Serine hydroxymethyltransferase (427 aa).

Residues L127 and 131–133 each bind (6S)-5,6,7,8-tetrahydrofolate; that span reads GHL. K236 bears the N6-(pyridoxal phosphate)lysine mark.

It belongs to the SHMT family. In terms of assembly, homodimer. The cofactor is pyridoxal 5'-phosphate.

The protein resides in the cytoplasm. The catalysed reaction is (6R)-5,10-methylene-5,6,7,8-tetrahydrofolate + glycine + H2O = (6S)-5,6,7,8-tetrahydrofolate + L-serine. It functions in the pathway one-carbon metabolism; tetrahydrofolate interconversion. Its pathway is amino-acid biosynthesis; glycine biosynthesis; glycine from L-serine: step 1/1. Functionally, catalyzes the reversible interconversion of serine and glycine with tetrahydrofolate (THF) serving as the one-carbon carrier. This reaction serves as the major source of one-carbon groups required for the biosynthesis of purines, thymidylate, methionine, and other important biomolecules. Also exhibits THF-independent aldolase activity toward beta-hydroxyamino acids, producing glycine and aldehydes, via a retro-aldol mechanism. This Paramagnetospirillum magneticum (strain ATCC 700264 / AMB-1) (Magnetospirillum magneticum) protein is Serine hydroxymethyltransferase.